We begin with the raw amino-acid sequence, 511 residues long: MTRKIDIFDTTLRDGEQSPGASMNTEEKLIVAQQLLRMHVDVIEAGFPISSPGDFRSVQEIGRLAGDDAVVVGLTRAVDKDIDRAAEALSCAKRPRIHTGLGVSPQHLADKLRISEDECVERAIRCVRYAKRYVEDVQFYAEDAGRADQGFLERVIQAVIEAGATVVNIPDTTGYQMPAAFGARIKGLCDNVRGIENVTIAVHTHNDLGMATALALAGVENGATQIECTINGLGERAGNTALEEVVMALRMHGDELDGHTDVVTQELTRASRLVSRITGMQVQANKAIVGANAFAHSSGIHQDGVLKSRGTYEIIDPADVGAAGSEIILSARSGHAALRHRLSELGYSFPESEFDDVYQRFLEIADQKKEVFDEDLESMVQERQRDVTAIYALESVQVVCGDAAIPTATVHITDEVGGEHVVACTGTGPVDAAYKAIDKVVSVHGDLQEFAVKAITRGIDAIGEVTVRIVAGDGRLYTGRGSDTDIVVSSAKAYVNAINRMIQTTRSKQGK.

The span at 1–16 shows a compositional bias: basic and acidic residues; it reads MTRKIDIFDTTLRDGE. The disordered stretch occupies residues 1–23; the sequence is MTRKIDIFDTTLRDGEQSPGASM. In terms of domain architecture, Pyruvate carboxyltransferase spans 5–268; sequence IDIFDTTLRD…HTDVVTQELT (264 aa). Mn(2+) contacts are provided by aspartate 14, histidine 203, histidine 205, and asparagine 239. A regulatory domain region spans residues 392–511; that stretch reads ALESVQVVCG…IQTTRSKQGK (120 aa).

This sequence belongs to the alpha-IPM synthase/homocitrate synthase family. LeuA type 1 subfamily. In terms of assembly, homodimer. Mn(2+) serves as cofactor.

The protein resides in the cytoplasm. It catalyses the reaction 3-methyl-2-oxobutanoate + acetyl-CoA + H2O = (2S)-2-isopropylmalate + CoA + H(+). Its pathway is amino-acid biosynthesis; L-leucine biosynthesis; L-leucine from 3-methyl-2-oxobutanoate: step 1/4. Catalyzes the condensation of the acetyl group of acetyl-CoA with 3-methyl-2-oxobutanoate (2-ketoisovalerate) to form 3-carboxy-3-hydroxy-4-methylpentanoate (2-isopropylmalate). The polypeptide is 2-isopropylmalate synthase (Olsenella uli (strain ATCC 49627 / DSM 7084 / CCUG 31166 / CIP 109912 / JCM 12494 / LMG 11480 / NCIMB 702895 / VPI D76D-27C) (Lactobacillus uli)).